The primary structure comprises 434 residues: MKTVRIETFGCKVNQYESEYMAEQLEKAGYVVLPDGNAAYYIVNSCAVTKEVEKKVKRLIKSIRNRNKNAKIILTGCFAQLSPDEAKNLPVDMVLGIDEKKHIVDHINSLNGKQQVVVSEPGRPVYEKVKGSFEDRTRSYIKVEDGCDNTCTYCAIRLARGTRIRSKPLEIFKEEFAEMVMKGYKEIVITGVNLGKYGKDMGSSLAELLKVIEKVPGDYRVRLSSINVEDVNDEIVKAFKRNPRLCPHLHISVQSGSDDVLKRMGRKYKISDFMRVVDKLRSIDPDFSITTDIIVGFPGETDADFQRTLELVEKVEFSRVHIFRFSPRPGTPASRMEGGVPESKKKERLDVLKEKAKDVSIRYRKRIIGKERKVLAEWYVMKGVLSGYDEYYVKHEFVGNRVGEFHSVRVKSLSEEGVISCRADMVEGKVPARG.

The region spanning 2 to 112 is the MTTase N-terminal domain; that stretch reads KTVRIETFGC…IVDHINSLNG (111 aa). Cys11, Cys46, Cys77, Cys147, Cys151, and Cys154 together coordinate [4Fe-4S] cluster. The Radical SAM core domain maps to 133-362; it reads FEDRTRSYIK…KEKAKDVSIR (230 aa).

The protein belongs to the methylthiotransferase family. MtaB subfamily. [4Fe-4S] cluster serves as cofactor.

The protein resides in the cytoplasm. It carries out the reaction N(6)-L-threonylcarbamoyladenosine(37) in tRNA + (sulfur carrier)-SH + AH2 + 2 S-adenosyl-L-methionine = 2-methylsulfanyl-N(6)-L-threonylcarbamoyladenosine(37) in tRNA + (sulfur carrier)-H + 5'-deoxyadenosine + L-methionine + A + S-adenosyl-L-homocysteine + 2 H(+). Catalyzes the methylthiolation of N6-threonylcarbamoyladenosine (t(6)A), leading to the formation of 2-methylthio-N6-threonylcarbamoyladenosine (ms(2)t(6)A) at position 37 in tRNAs that read codons beginning with adenine. The polypeptide is Threonylcarbamoyladenosine tRNA methylthiotransferase MtaB (mtaB) (Thermotoga maritima (strain ATCC 43589 / DSM 3109 / JCM 10099 / NBRC 100826 / MSB8)).